We begin with the raw amino-acid sequence, 562 residues long: Nucleoprotein (562 aa).

The interval 53-238 (MRRVKRDDSD…ITQEESQINI (186 aa)) is binding site for the cap structure m7GTP. The Mn(2+) site is built by aspartate 381 and glutamate 383. Positions 391, 498, 501, and 522 each coordinate Zn(2+). Aspartate 526 contacts Mn(2+).

This sequence belongs to the arenaviridae nucleocapsid protein family. As to quaternary structure, homomultimerizes to form the nucleocapsid. Binds to viral genomic RNA. Interacts with glycoprotein G2. Interacts with protein Z; this interaction probably directs the encapsidated genome to budding sites. Interacts with protein L; this interaction does not interfere with Z-L interaction. Interacts with host IKBKE (via Protein kinase domain); the interaction inhibits IKBKE kinase activity.

It is found in the virion. It localises to the host cytoplasm. In terms of biological role, encapsidates the genome, protecting it from nucleases. The encapsidated genomic RNA is termed the nucleocapsid (NC). Serves as template for viral transcription and replication. The increased presence of protein N in host cell does not seem to trigger the switch from transcription to replication as observed in other negative strain RNA viruses. Through the interaction with host IKBKE, strongly inhibits the phosphorylation and nuclear translocation of host IRF3, a protein involved in interferon activation pathway, leading to the inhibition of interferon-beta and IRF3-dependent promoters activation. Also encodes a functional 3'-5' exoribonuclease that degrades preferentially dsRNA substrates and thereby participates in the suppression of interferon induction. The chain is Nucleoprotein from Neotoma (wood rats).